The following is a 501-amino-acid chain: Protein DETOXIFICATION 37 (501 aa).

A run of 12 helical transmembrane segments spans residues 44 to 64, 84 to 104, 134 to 154, 163 to 183, 200 to 220, 222 to 242, 280 to 300, 310 to 330, 352 to 372, 396 to 416, 422 to 442, and 453 to 473; these read MMIE…VYVI, LAAA…LLLG, VVLI…NPIL, VATL…AYAV, SAYI…IAVY, LGYG…IIVV, AVML…AGLL, LAIC…FNAA, VVTT…VLSW, FLAI…VAVG, FVAY…GFVL, and IWTG…IVTL.

Belongs to the multi antimicrobial extrusion (MATE) (TC 2.A.66.1) family.

Its subcellular location is the membrane. The polypeptide is Protein DETOXIFICATION 37 (Arabidopsis thaliana (Mouse-ear cress)).